Here is a 513-residue protein sequence, read N- to C-terminus: Probable metalloreductase AIM14 (513 aa).

Transmembrane regions (helical) follow at residues 22-42, 66-86, 103-123, 138-158, 166-186, 193-213, and 219-239; these read GYIIFGVSVLYALLLASAHFL, PFWVHTLLWAAIVVGLAFTNV, LAFCLVPLDLALALRPCLLGQ, LIILAGVVHGIGFFVKWTIHH, WANLAGIIVALFSVLLVIVSS, FYSYFYAFHNFTVALFVLLMI, and GVSDFVLLSVALLLFQGASRV. A Ferric oxidoreductase domain is found at 100-211; that stretch reads LGRLAFCLVP…NFTVALFVLL (112 aa). An FAD-binding FR-type domain is found at 240–368; the sequence is YNGYSVPGLT…GIPLYEYFDN (129 aa).

This sequence belongs to the ferric reductase (FRE) family. AIM14 subfamily.

It is found in the membrane. Functionally, probable cell surface metalloreductase. May be involved in iron or copper homeostasis. This is Probable metalloreductase AIM14 (AIM14) from Clavispora lusitaniae (strain ATCC 42720) (Yeast).